The primary structure comprises 107 residues: Phosphoribosyl-ATP pyrophosphatase (107 aa).

It belongs to the PRA-PH family.

The protein localises to the cytoplasm. It carries out the reaction 1-(5-phospho-beta-D-ribosyl)-ATP + H2O = 1-(5-phospho-beta-D-ribosyl)-5'-AMP + diphosphate + H(+). Its pathway is amino-acid biosynthesis; L-histidine biosynthesis; L-histidine from 5-phospho-alpha-D-ribose 1-diphosphate: step 2/9. This is Phosphoribosyl-ATP pyrophosphatase from Neisseria gonorrhoeae (strain ATCC 700825 / FA 1090).